Consider the following 586-residue polypeptide: Acyl-coenzyme A synthetase ACSM3, mitochondrial (586 aa).

The transit peptide at 1–27 (MLARVTRKMLRHAKCFQRLAIFGSVRA) directs the protein to the mitochondrion. N6-succinyllysine occurs at positions 73 and 106. Lys-157 is modified (N6-acetyllysine). ATP is bound by residues 235 to 243 (TSGTSGYPK), 374 to 379 (EGYGQT), Asp-461, Arg-476, and Lys-572.

It belongs to the ATP-dependent AMP-binding enzyme family. Mg(2+) is required as a cofactor. Mn(2+) serves as cofactor.

Its subcellular location is the mitochondrion. It is found in the mitochondrion matrix. It catalyses the reaction a medium-chain fatty acid + ATP + CoA = a medium-chain fatty acyl-CoA + AMP + diphosphate. The catalysed reaction is propanoate + ATP + CoA = propanoyl-CoA + AMP + diphosphate. It carries out the reaction butanoate + ATP + CoA = butanoyl-CoA + AMP + diphosphate. The enzyme catalyses 2-methylpropanoate + ATP + CoA = 2-methylpropanoyl-CoA + AMP + diphosphate. It catalyses the reaction 2-methylbutanoate + ATP + CoA = 2-methylbutanoyl-CoA + AMP + diphosphate. The catalysed reaction is octanoate + ATP + CoA = octanoyl-CoA + AMP + diphosphate. Functionally, catalyzes the activation of fatty acids by CoA to produce an acyl-CoA, the first step in fatty acid metabolism. Capable of activating medium-chain fatty acids with a preference for isobutyrate among fatty acids with 2-6 carbon atoms. The polypeptide is Acyl-coenzyme A synthetase ACSM3, mitochondrial (ACSM3) (Homo sapiens (Human)).